We begin with the raw amino-acid sequence, 200 residues long: dITP/XTP pyrophosphatase (200 aa).

Residue 8 to 13 (TGNQGK) coordinates substrate. D69 serves as the catalytic Proton acceptor. D69 contacts Mg(2+). Residues S70, 154–157 (FGYD), K177, and 182–183 (HR) contribute to the substrate site.

Belongs to the HAM1 NTPase family. In terms of assembly, homodimer. Mg(2+) is required as a cofactor.

It catalyses the reaction XTP + H2O = XMP + diphosphate + H(+). The enzyme catalyses dITP + H2O = dIMP + diphosphate + H(+). It carries out the reaction ITP + H2O = IMP + diphosphate + H(+). Pyrophosphatase that catalyzes the hydrolysis of nucleoside triphosphates to their monophosphate derivatives, with a high preference for the non-canonical purine nucleotides XTP (xanthosine triphosphate), dITP (deoxyinosine triphosphate) and ITP. Seems to function as a house-cleaning enzyme that removes non-canonical purine nucleotides from the nucleotide pool, thus preventing their incorporation into DNA/RNA and avoiding chromosomal lesions. In Vibrio vulnificus (strain CMCP6), this protein is dITP/XTP pyrophosphatase.